A 248-amino-acid chain; its full sequence is Putative imidazole glycerol phosphate synthase subunit hisF2 (248 aa).

Aspartate 129 is a catalytic residue.

Belongs to the HisA/HisF family. As to quaternary structure, heterodimer of HisH and HisF.

It localises to the cytoplasm. The catalysed reaction is 5-[(5-phospho-1-deoxy-D-ribulos-1-ylimino)methylamino]-1-(5-phospho-beta-D-ribosyl)imidazole-4-carboxamide + L-glutamine = D-erythro-1-(imidazol-4-yl)glycerol 3-phosphate + 5-amino-1-(5-phospho-beta-D-ribosyl)imidazole-4-carboxamide + L-glutamate + H(+). The protein operates within amino-acid biosynthesis; L-histidine biosynthesis; L-histidine from 5-phospho-alpha-D-ribose 1-diphosphate: step 5/9. IGPS catalyzes the conversion of PRFAR and glutamine to IGP, AICAR and glutamate. The HisF subunit catalyzes the cyclization activity that produces IGP and AICAR from PRFAR using the ammonia provided by the HisH subunit. The sequence is that of Putative imidazole glycerol phosphate synthase subunit hisF2 (hisF2) from Campylobacter jejuni subsp. jejuni serotype O:2 (strain ATCC 700819 / NCTC 11168).